A 572-amino-acid polypeptide reads, in one-letter code: Receptor-type adenylate cyclase GRESAG 4.2 (572 aa).

The Extracellular segment spans residues 1–225 (RKTLLTFGLN…PNGNALTPAQ (225 aa)). Residues N10, N77, and N152 are each glycosylated (N-linked (GlcNAc...) asparagine). The chain crosses the membrane as a helical span at residues 226 to 251 (LDWCGWCRFACADTGSRLTVFLCCIM). Residues 252–572 (RNKRDNDNAP…TVRRLSVALQ (321 aa)) lie on the Cytoplasmic side of the membrane. The Guanylate cyclase domain maps to 269-424 (TLIFTDIESS…QTANTAARTE (156 aa)). 2 residues coordinate Mg(2+): D274 and D317.

This sequence belongs to the adenylyl cyclase class-3 family. Mg(2+) serves as cofactor.

It is found in the cell membrane. The enzyme catalyses ATP = 3',5'-cyclic AMP + diphosphate. Could act as a receptor for an unknown ligand. The chain is Receptor-type adenylate cyclase GRESAG 4.2 (GRESAG 4.2) from Trypanosoma brucei brucei.